The primary structure comprises 706 residues: MESPTKEIEEFESNSLKHLQPEQIEKIWLRLRGLRKYKKTSQRLRSLVKQLERGEASVVDLKKNLEYAATVLESVYIDETRRLLDTEDELSDIQSDAVPSEVRDWLASTFTRQMGMMLRRSDEKPRFKSIVHAVQAGIFVERMYRRTSNMVGLSYPPAVIDALKDVDTWSFDVFSLNEASGDHALKFIFYELLTRYDLISRFKIPISALVSFVEALEVGYSKHKNPYHNLMHAADVTQTVHYLLYKTGVANWLTELEIFAIIFSAAIHDYEHTGTTNNFHIQTRSDPAILYNDRSVLENHHLSAAYRLLQEDEEMNILVNLSKDDWREFRTLVIEMVMATDMSCHFQQIKAMKTALQQPEAIEKPKALSLMLHTADISHPAKAWDLHHRWTMSLLEEFFRQGDREAELGLPFSPLCDRKSTMVAQSQVGFIDFIVEPTFTVLTDMTEKIVSPLIDESSQTGGTGQRRSSLNSINSSDAKRSGVKSSGSDGSAPINNSVIPVDYKSFKATWTEVVQINRERWRAKVPKEEKAKKEAEEKARLAAEEKQKEMEAKSQAEQGTTSKGEKKTSGEAKSQVNGTRKGDNPRGKNSKGEKAGEKQQNGDLKDGKNKADKKDHSNTGNESKKTDGTKKRSHGSPAPSTSSTSRITLPVIKPPLRHFKRPAYASSSYAPSVPKKTDDHPVRYKMLDQRIKMKKIQNISHHWNKK.

At Met1 the chain carries N-acetylmethionine. The interval 123-146 (EKPRFKSIVHAVQAGIFVERMYRR) is calmodulin-binding. The PDEase domain occupies 151-528 (VGLSYPPAVI…ERWRAKVPKE (378 aa)). Residue His228 is the Proton donor of the active site. Zn(2+) is bound by residues His232, His268, Asp269, and Asp376. Position 269 (Asp269) interacts with Mg(2+). Disordered stretches follow at residues 453 to 497 (LIDE…INNS) and 524 to 655 (KVPK…IKPP). 2 stretches are compositionally biased toward polar residues: residues 456-476 (ESSQ…INSS) and 483-497 (VKSS…INNS). Basic and acidic residues-rich tracts occupy residues 524 to 554 (KVPK…EAKS), 580 to 597 (RKGD…KAGE), and 603 to 630 (DLKD…DGTK). Polar residues predominate over residues 638-647 (APSTSSTSRI).

The protein belongs to the cyclic nucleotide phosphodiesterase family. PDE1 subfamily. Homodimer. The cofactor is Zn(2+). Requires Mg(2+) as cofactor. In terms of tissue distribution, highly expressed in testis and at moderate levels in heart. Expressed at a moderate level in brain, the cerebellum, testis, heart and olfactory epithelium. As to expression, highly expressed in olfactory epithelium and at very low levels, if any, in other tissues. In the cochlea, expressed in the inner and outer hair cells (at protein level). In the brain, highly expressed in the neurons of the granule layer of the cerebellum, some Purkinje cells, the central amygdaloid nucleus, and the interpolar spinal trigem nucleus and, at moderate levels, in the glomerular and external plexiform layer of the olfactory bulb as well as in parts of the caudate-putamen and olfactory tubercle.

Its subcellular location is the lysosome. It carries out the reaction a nucleoside 3',5'-cyclic phosphate + H2O = a nucleoside 5'-phosphate + H(+). The catalysed reaction is 3',5'-cyclic GMP + H2O = GMP + H(+). The enzyme catalyses 3',5'-cyclic AMP + H2O = AMP + H(+). With respect to regulation, type I PDE are activated by the binding of calmodulin in the presence of Ca(2+). Different splice variants may have different sensitivities to Ca(2+). Its activity is regulated as follows. Exhibits a higher sensitivity to Ca(2+) stimulation than isoforms 1 and 2. In terms of biological role, calmodulin-dependent cyclic nucleotide phosphodiesterase with a dual specificity for cAMP and cGMP, which are key regulators of many important physiological processes. Exhibits high affinity for both cAMP and cGMP. Modulates the amplitude and duration of the cAMP signal in sensory cilia in response to odorant stimulation, hence contributing to the generation of action potentials. Regulates smooth muscle cell proliferation. Regulates the stability of growth factor receptors, including PDGFRB. The polypeptide is Dual specificity calcium/calmodulin-dependent 3',5'-cyclic nucleotide phosphodiesterase 1C (Mus musculus (Mouse)).